The chain runs to 198 residues: MNLNKNNFLNYSILIPYLILAGIGIVMIFSTTVPDQLQKGLNPYKLVINQTAFVLLSIIMIAVIYRLKLRALKNRKMIGIIMVILILSLIFCRIMPSSFALTAPVNGARGWIHIPGIGTVQPAEFAKVFIIWYLASVFSTKQEEIEKNDINEIFKGKTLTQKLFGGWRLPVVAILLVDLIMPDLGNTMIIGAVALIMI.

Transmembrane regions (helical) follow at residues 13–33, 44–64, 77–97, and 171–191; these read ILIP…STTV, YKLV…IAVI, MIGI…IMPS, and VVAI…MIIG.

This sequence belongs to the SEDS family. FtsW subfamily.

It localises to the cell membrane. It catalyses the reaction [GlcNAc-(1-&gt;4)-Mur2Ac(oyl-L-Ala-gamma-D-Glu-L-Lys-D-Ala-D-Ala)](n)-di-trans,octa-cis-undecaprenyl diphosphate + beta-D-GlcNAc-(1-&gt;4)-Mur2Ac(oyl-L-Ala-gamma-D-Glu-L-Lys-D-Ala-D-Ala)-di-trans,octa-cis-undecaprenyl diphosphate = [GlcNAc-(1-&gt;4)-Mur2Ac(oyl-L-Ala-gamma-D-Glu-L-Lys-D-Ala-D-Ala)](n+1)-di-trans,octa-cis-undecaprenyl diphosphate + di-trans,octa-cis-undecaprenyl diphosphate + H(+). It functions in the pathway cell wall biogenesis; peptidoglycan biosynthesis. In terms of biological role, peptidoglycan polymerase that is essential for cell division. This is Probable peptidoglycan glycosyltransferase FtsW (ftsW) from Lactococcus lactis subsp. cremoris (Streptococcus cremoris).